Here is a 446-residue protein sequence, read N- to C-terminus: Iron-sulfur cluster assembly SufBD family protein PH1385 (446 aa).

Belongs to the iron-sulfur cluster assembly SufBD family.

The protein is Iron-sulfur cluster assembly SufBD family protein PH1385 of Pyrococcus horikoshii (strain ATCC 700860 / DSM 12428 / JCM 9974 / NBRC 100139 / OT-3).